The primary structure comprises 343 residues: Dihydroorotase (343 aa).

2 residues coordinate Zn(2+): H14 and H16. Substrate contacts are provided by residues 16–18 and N42; that span reads HVR. Residues K98, H135, and H173 each coordinate Zn(2+). At K98 the chain carries N6-carboxylysine. H135 is a substrate binding site. Substrate is bound at residue L219. Residue D247 participates in Zn(2+) binding. D247 is a catalytic residue. 2 residues coordinate substrate: H251 and A263.

Belongs to the metallo-dependent hydrolases superfamily. DHOase family. Class II DHOase subfamily. As to quaternary structure, homodimer. Zn(2+) is required as a cofactor.

It catalyses the reaction (S)-dihydroorotate + H2O = N-carbamoyl-L-aspartate + H(+). It participates in pyrimidine metabolism; UMP biosynthesis via de novo pathway; (S)-dihydroorotate from bicarbonate: step 3/3. Catalyzes the reversible cyclization of carbamoyl aspartate to dihydroorotate. This chain is Dihydroorotase, found in Marinobacter nauticus (strain ATCC 700491 / DSM 11845 / VT8) (Marinobacter aquaeolei).